Consider the following 264-residue polypeptide: Putative HTH-type transcriptional regulator TrmBL2 (264 aa).

Positions 33-54 (LTPAELASVSEVPAPRTYDVLR) form a DNA-binding region, H-T-H motif.

The protein belongs to the transcriptional regulator TrmB family.

Binds to the maltodextrin transport gene cluster (mdxE operon) promoter and to some other TGM (Thermococcales-Glycolytic-Motif) sequences, but not exclusively. The protein is Putative HTH-type transcriptional regulator TrmBL2 (trmBL2) of Pyrococcus furiosus (strain ATCC 43587 / DSM 3638 / JCM 8422 / Vc1).